The sequence spans 534 residues: Paired box protein Pax-1 (534 aa).

Residues 98 to 224 constitute a DNA-binding region (paired); sequence TYGEVNQLGG…SSISRILRNK (127 aa). The tract at residues 101 to 157 is PAI subdomain; it reads EVNQLGGVFVNGRPLPNAIRLRIVELAQLGIRPCDISRQLRVSHGCVSKILARYNET. The segment at 176–224 is RED subdomain; it reads NVVKHIRDYKQGDPGIFAWEIRDRLLADGVCDKYNVPSVSSISRILRNK. 2 disordered regions span residues 424 to 480 and 492 to 511; these read PSRE…AAAP and EEEA…QAQP.

It is found in the nucleus. Functionally, this protein is a transcriptional activator. It may play a role in the formation of segmented structures of the embryo. May play an important role in the normal development of the vertebral column. In Homo sapiens (Human), this protein is Paired box protein Pax-1 (PAX1).